Reading from the N-terminus, the 425-residue chain is Serine--tRNA ligase (425 aa).

231-233 (TAE) contributes to the L-serine binding site. 262-264 (RSE) contributes to the ATP binding site. An L-serine-binding site is contributed by Glu-285. Residue 349–352 (EISS) coordinates ATP. Ser-385 is an L-serine binding site.

It belongs to the class-II aminoacyl-tRNA synthetase family. Type-1 seryl-tRNA synthetase subfamily. In terms of assembly, homodimer. The tRNA molecule binds across the dimer.

The protein resides in the cytoplasm. The catalysed reaction is tRNA(Ser) + L-serine + ATP = L-seryl-tRNA(Ser) + AMP + diphosphate + H(+). It carries out the reaction tRNA(Sec) + L-serine + ATP = L-seryl-tRNA(Sec) + AMP + diphosphate + H(+). The protein operates within aminoacyl-tRNA biosynthesis; selenocysteinyl-tRNA(Sec) biosynthesis; L-seryl-tRNA(Sec) from L-serine and tRNA(Sec): step 1/1. Functionally, catalyzes the attachment of serine to tRNA(Ser). Is also able to aminoacylate tRNA(Sec) with serine, to form the misacylated tRNA L-seryl-tRNA(Sec), which will be further converted into selenocysteinyl-tRNA(Sec). This chain is Serine--tRNA ligase, found in Bartonella tribocorum (strain CIP 105476 / IBS 506).